A 4743-amino-acid polypeptide reads, in one-letter code: Apolipoprotein B-100 (4743 aa).

Residues 1–27 (MGPQRPALRAPLLLLFLLLFLDTSVWA) form the signal peptide. The tract at residues 29–113 (DATRFKHLRK…KNSEEFASAM (85 aa)) is heparin-binding. The Vitellogenin domain maps to 33 to 660 (FKHLRKYVYS…PSSYLPKESM (628 aa)). C65 and C84 are joined by a disulfide. Residue N172 is glycosylated (N-linked (GlcNAc...) asparagine). 4 disulfide bridges follow: C173–C199, C232–C248, C372–C377, and C466–C501. The tract at residues 219–293 (VRPLSTLISS…RFFRGGINQV (75 aa)) is heparin-binding. Residues 890-947 (NTNFFHESGLEARVALKAGQLKVIIPSPKRPVKLFSGSNTLHLVSTTKTEVIPPLIEN) are heparin-binding. A disulfide bridge connects residues C954 and C964. N971, N1336, N1345, and N1491 each carry an N-linked (GlcNAc...) asparagine glycan. An N6-acetyllysine modification is found at K1973. S2006 carries the phosphoserine modification. Residues 2010 to 2145 (NDAFDEPREF…EKLSQLETYA (136 aa)) form a heparin-binding region. Residues N2094, N2522, N2662, N2741, N2791, N2897, N2944, and N3063 are each glycosylated (N-linked (GlcNAc...) asparagine). The heparin-binding stretch occupies residues 3123-3198 (FLKTTKQSFD…KIKFDKYKTE (76 aa)). The interval 3136-3146 (KAQYKKNRDKH) is basic (possible receptor binding region). Residues N3186, N3299, and N3321 are each glycosylated (N-linked (GlcNAc...) asparagine). The LDL receptor binding stretch occupies residues 3336–3356 (VTDALQYKLEGTSRLMRKKVL). The interval 3346–3479 (GTSRLMRKKV…QEYSGSVANE (134 aa)) is heparin-binding. The basic (possible receptor binding region) stretch occupies residues 3349-3357 (RLMRKKVLK). N-linked (GlcNAc...) asparagine glycosylation is found at N3428, N3715, and N3828. S3981 bears the Phosphoserine mark. Position 3985 is a phosphothreonine (T3985). N4203 and N4232 each carry an N-linked (GlcNAc...) asparagine glycan.

As to quaternary structure, interacts with PCSK9. Interacts with MTTP. Interacts with AUP1. Interacts with CIDEB. In terms of processing, palmitoylated; structural requirement for proper assembly of the hydrophobic core of the lipoprotein particle. Detected in intestine and liver (at protein level).

The protein resides in the cytoplasm. It localises to the secreted. Its subcellular location is the lipid droplet. In terms of biological role, apolipoprotein B is a major protein constituent of chylomicrons (apo B-48), LDL (apo B-100) and VLDL (apo B-100). Apo B-100 functions as a recognition signal for the cellular binding and internalization of LDL particles by the apoB/E receptor. In Rattus norvegicus (Rat), this protein is Apolipoprotein B-100 (Apob).